Here is a 501-residue protein sequence, read N- to C-terminus: ADP,ATP carrier protein 3 (501 aa).

The next 12 helical transmembrane spans lie at 23–43 (LKLF…FGAL), 59–79 (IISL…TVLY), 90–110 (YIFY…AYII), 146–166 (YALM…LMFW), 183–203 (PVLG…LVFF), 227–247 (IMLQ…MLLF), 293–313 (IALL…PWKA), 326–346 (FNFM…FMVI), 361–381 (LLTP…IIFI), 383–403 (EIGA…VGAI), 446–466 (FGKS…PTAT), and 470–490 (IIIY…WNVI).

Belongs to the ADP/ATP translocase tlc family.

It is found in the cell membrane. In terms of biological role, provides the rickettsial cell with host ATP in exchange for rickettsial ADP. This is an obligate exchange system. This energy acquiring activity is an important component of rickettsial parasitism. This chain is ADP,ATP carrier protein 3 (tlcC), found in Rickettsia felis (strain ATCC VR-1525 / URRWXCal2) (Rickettsia azadi).